The primary structure comprises 382 residues: uncharacterized protein (382 aa).

This is an uncharacterized protein from Frog virus 3 (isolate Goorha) (FV-3).